The following is a 305-amino-acid chain: Translation initiation factor eIF2B subunit alpha (305 aa).

Lys-35 carries the post-translational modification N6-acetyllysine.

The protein belongs to the eIF-2B alpha/beta/delta subunits family. Component of the translation initiation factor 2B (eIF2B) complex which is a heterodecamer of two sets of five different subunits: alpha, beta, gamma, delta and epsilon. Subunits alpha, beta and delta comprise a regulatory subcomplex and subunits epsilon and gamma comprise a catalytic subcomplex. Within the complex, the hexameric regulatory complex resides at the center, with the two heterodimeric catalytic subcomplexes bound on opposite sides.

The protein localises to the cytoplasm. It is found in the cytosol. Activated by the chemical integrated stress response (ISR) inhibitor ISRIB which stimulates guanine nucleotide exchange factor activity for both phosphorylated and unphosphorylated eIF2. Its function is as follows. Acts as a component of the translation initiation factor 2B (eIF2B) complex, which catalyzes the exchange of GDP for GTP on eukaryotic initiation factor 2 (eIF2) gamma subunit. Its guanine nucleotide exchange factor activity is repressed when bound to eIF2 complex phosphorylated on the alpha subunit, thereby limiting the amount of methionyl-initiator methionine tRNA available to the ribosome and consequently global translation is repressed. This chain is Translation initiation factor eIF2B subunit alpha (Eif2b1), found in Mus musculus (Mouse).